The sequence spans 322 residues: Fructose-1,6-bisphosphatase class 1 (322 aa).

The Mg(2+) site is built by Glu84, Asp103, Leu105, and Asp106. Substrate is bound by residues Asp106 to Ser109, Asn198, and Lys264. Glu270 serves as a coordination point for Mg(2+).

This sequence belongs to the FBPase class 1 family. In terms of assembly, homotetramer. Requires Mg(2+) as cofactor.

The protein resides in the cytoplasm. The catalysed reaction is beta-D-fructose 1,6-bisphosphate + H2O = beta-D-fructose 6-phosphate + phosphate. It participates in carbohydrate biosynthesis; gluconeogenesis. This Saccharophagus degradans (strain 2-40 / ATCC 43961 / DSM 17024) protein is Fructose-1,6-bisphosphatase class 1.